The chain runs to 156 residues: Small ribosomal subunit protein uS7 (156 aa).

Belongs to the universal ribosomal protein uS7 family. As to quaternary structure, part of the 30S ribosomal subunit. Contacts proteins S9 and S11.

Its function is as follows. One of the primary rRNA binding proteins, it binds directly to 16S rRNA where it nucleates assembly of the head domain of the 30S subunit. Is located at the subunit interface close to the decoding center, probably blocks exit of the E-site tRNA. The protein is Small ribosomal subunit protein uS7 of Nitrosospira multiformis (strain ATCC 25196 / NCIMB 11849 / C 71).